Here is a 324-residue protein sequence, read N- to C-terminus: UPF0158 protein CPn_0518/CP_0235/CPj0518/CpB0539 (324 aa).

It belongs to the UPF0158 family.

The sequence is that of UPF0158 protein CPn_0518/CP_0235/CPj0518/CpB0539 from Chlamydia pneumoniae (Chlamydophila pneumoniae).